The primary structure comprises 67 residues: ATP synthase F(0) complex subunit 8 (67 aa).

A helical membrane pass occupies residues 8–24 (TWFTTILATITTLFILF). An N6-acetyllysine; alternate modification is found at lysine 54. Lysine 54 is modified (N6-succinyllysine; alternate). An N6-acetyllysine modification is found at lysine 57.

The protein belongs to the ATPase protein 8 family. Component of the ATP synthase complex composed at least of ATP5F1A/subunit alpha, ATP5F1B/subunit beta, ATP5MC1/subunit c (homooctomer), MT-ATP6/subunit a, MT-ATP8/subunit 8, ATP5ME/subunit e, ATP5MF/subunit f, ATP5MG/subunit g, ATP5MK/subunit k, ATP5MJ/subunit j, ATP5F1C/subunit gamma, ATP5F1D/subunit delta, ATP5F1E/subunit epsilon, ATP5PF/subunit F6, ATP5PB/subunit b, ATP5PD/subunit d, ATP5PO/subunit OSCP. ATP synthase complex consists of a soluble F(1) head domain (subunits alpha(3) and beta(3)) - the catalytic core - and a membrane F(0) domain - the membrane proton channel (subunits c, a, 8, e, f, g, k and j). These two domains are linked by a central stalk (subunits gamma, delta, and epsilon) rotating inside the F1 region and a stationary peripheral stalk (subunits F6, b, d, and OSCP). Interacts with PRICKLE3.

It localises to the mitochondrion membrane. In terms of biological role, subunit 8, of the mitochondrial membrane ATP synthase complex (F(1)F(0) ATP synthase or Complex V) that produces ATP from ADP in the presence of a proton gradient across the membrane which is generated by electron transport complexes of the respiratory chain. ATP synthase complex consist of a soluble F(1) head domain - the catalytic core - and a membrane F(1) domain - the membrane proton channel. These two domains are linked by a central stalk rotating inside the F(1) region and a stationary peripheral stalk. During catalysis, ATP synthesis in the catalytic domain of F(1) is coupled via a rotary mechanism of the central stalk subunits to proton translocation. In vivo, can only synthesize ATP although its ATP hydrolase activity can be activated artificially in vitro. Part of the complex F(0) domain. The sequence is that of ATP synthase F(0) complex subunit 8 from Talpa europaea (European mole).